The primary structure comprises 159 residues: Cytochrome c-type biogenesis protein CcmE (159 aa).

Residues 1-8 (MNPRRKKR) lie on the Cytoplasmic side of the membrane. A helical; Signal-anchor for type II membrane protein transmembrane segment spans residues 9 to 29 (LLVIVAVLFGIGASIGLVLYA). The Periplasmic portion of the chain corresponds to 30–159 (LQENINLFYT…KPKYNLDSGN (130 aa)). Residues H130 and Y134 each contribute to the heme site.

The protein belongs to the CcmE/CycJ family.

The protein localises to the cell inner membrane. Functionally, heme chaperone required for the biogenesis of c-type cytochromes. Transiently binds heme delivered by CcmC and transfers the heme to apo-cytochromes in a process facilitated by CcmF and CcmH. In Pseudoalteromonas translucida (strain TAC 125), this protein is Cytochrome c-type biogenesis protein CcmE.